Here is a 449-residue protein sequence, read N- to C-terminus: PGL/p-HBAD biosynthesis rhamnosyltransferase (449 aa).

It belongs to the glycosyltransferase 28 family.

Functionally, catalyzes the transfer of the first rhamnosyl residue on p-hydroxybenzoic acid or phenolphthiocerol derivatives to form, after O-methylation at position 2 of the sugar unit, mono-O-methyl-glycosyl-p-hydroxybenzoic acid derivative (p-HBAD I) and 2-O-methyl-rhamnosyl-phenolphthiocerol dimycocerosate (also called mycoside B) during p-hydroxybenzoic acid derivatives (p-HBAD) and glycosylated phenolphthiocerol dimycocerosates (PGL) biosynthesis. The polypeptide is PGL/p-HBAD biosynthesis rhamnosyltransferase (Mycobacterium bovis (strain BCG / Pasteur 1173P2)).